Consider the following 307-residue polypeptide: Probable GTP 3',8-cyclase (307 aa).

The 223-residue stretch at 5-227 (AYGRRISSLR…RRTKYYLGGA (223 aa)) folds into the Radical SAM core domain. Arginine 14 is a binding site for GTP. The [4Fe-4S] cluster site is built by cysteine 21 and cysteine 25. Tyrosine 27 is an S-adenosyl-L-methionine binding site. Cysteine 28 contacts [4Fe-4S] cluster. Lysine 61 lines the GTP pocket. Glycine 65 lines the S-adenosyl-L-methionine pocket. A GTP-binding site is contributed by threonine 89. Serine 113 is an S-adenosyl-L-methionine binding site. GTP is bound at residue lysine 151. 2 residues coordinate [4Fe-4S] cluster: cysteine 241 and cysteine 244. 246–248 (RLR) is a GTP binding site. Cysteine 258 contacts [4Fe-4S] cluster.

The protein belongs to the radical SAM superfamily. MoaA family. The cofactor is [4Fe-4S] cluster.

The catalysed reaction is GTP + AH2 + S-adenosyl-L-methionine = (8S)-3',8-cyclo-7,8-dihydroguanosine 5'-triphosphate + 5'-deoxyadenosine + L-methionine + A + H(+). The protein operates within cofactor biosynthesis; molybdopterin biosynthesis. Catalyzes the cyclization of GTP to (8S)-3',8-cyclo-7,8-dihydroguanosine 5'-triphosphate. This chain is Probable GTP 3',8-cyclase, found in Methanocella arvoryzae (strain DSM 22066 / NBRC 105507 / MRE50).